The primary structure comprises 416 residues: Enolase (416 aa).

Glutamine 160 serves as a coordination point for (2R)-2-phosphoglycerate. Glutamate 204 acts as the Proton donor in catalysis. Mg(2+) is bound by residues aspartate 239, glutamate 280, and aspartate 306. Lysine 331, arginine 360, serine 361, and lysine 382 together coordinate (2R)-2-phosphoglycerate. Residue lysine 331 is the Proton acceptor of the active site.

The protein belongs to the enolase family. Mg(2+) serves as cofactor.

The protein localises to the cytoplasm. The protein resides in the secreted. It is found in the cell surface. The enzyme catalyses (2R)-2-phosphoglycerate = phosphoenolpyruvate + H2O. It functions in the pathway carbohydrate degradation; glycolysis; pyruvate from D-glyceraldehyde 3-phosphate: step 4/5. Its function is as follows. Catalyzes the reversible conversion of 2-phosphoglycerate (2-PG) into phosphoenolpyruvate (PEP). It is essential for the degradation of carbohydrates via glycolysis. This chain is Enolase, found in Sulfurisphaera tokodaii (strain DSM 16993 / JCM 10545 / NBRC 100140 / 7) (Sulfolobus tokodaii).